Reading from the N-terminus, the 410-residue chain is Hemocyanin, beta-C chain unit D (410 aa).

Cu cation is bound by residues histidine 44 and histidine 55. Cysteine 50 and cysteine 59 are disulfide-bonded. The segment at residues 60 to 62 (CVH) is a cross-link (2'-(S-cysteinyl)-histidine (Cys-His)). Cu cation contacts are provided by histidine 71, histidine 175, histidine 179, and histidine 206. A disulfide bridge connects residues cysteine 165 and cysteine 232. A glycan (N-linked (GlcNAc...) asparagine) is linked at asparagine 253. Cysteine 321 and cysteine 332 are joined by a disulfide.

Belongs to the tyrosinase family. Hemocyanin subfamily. Decamers of large identical subunits (450 kDa), each containing 8 globular oxygen-binding functional units. Cu(2+) serves as cofactor.

Functionally, hemocyanins are copper-containing oxygen carriers occurring freely dissolved in the hemolymph of many mollusks and arthropods. The polypeptide is Hemocyanin, beta-C chain unit D (Helix pomatia (Roman snail)).